The following is a 487-amino-acid chain: Glutamyl-tRNA(Gln) amidotransferase subunit A (487 aa).

Active-site charge relay system residues include lysine 74 and serine 149. Catalysis depends on serine 173, which acts as the Acyl-ester intermediate.

This sequence belongs to the amidase family. GatA subfamily. As to quaternary structure, heterotrimer of A, B and C subunits.

It catalyses the reaction L-glutamyl-tRNA(Gln) + L-glutamine + ATP + H2O = L-glutaminyl-tRNA(Gln) + L-glutamate + ADP + phosphate + H(+). Allows the formation of correctly charged Gln-tRNA(Gln) through the transamidation of misacylated Glu-tRNA(Gln) in organisms which lack glutaminyl-tRNA synthetase. The reaction takes place in the presence of glutamine and ATP through an activated gamma-phospho-Glu-tRNA(Gln). In Synechococcus sp. (strain WH7803), this protein is Glutamyl-tRNA(Gln) amidotransferase subunit A.